A 934-amino-acid chain; its full sequence is 2-oxoglutarate dehydrogenase E1 component (934 aa).

Belongs to the alpha-ketoglutarate dehydrogenase family. Homodimer. Part of the 2-oxoglutarate dehydrogenase (OGDH) complex composed of E1 (2-oxoglutarate dehydrogenase), E2 (dihydrolipoamide succinyltransferase) and E3 (dihydrolipoamide dehydrogenase); the complex contains multiple copies of the three enzymatic components (E1, E2 and E3). It depends on thiamine diphosphate as a cofactor.

The catalysed reaction is N(6)-[(R)-lipoyl]-L-lysyl-[protein] + 2-oxoglutarate + H(+) = N(6)-[(R)-S(8)-succinyldihydrolipoyl]-L-lysyl-[protein] + CO2. E1 component of the 2-oxoglutarate dehydrogenase (OGDH) complex which catalyzes the decarboxylation of 2-oxoglutarate, the first step in the conversion of 2-oxoglutarate to succinyl-CoA and CO(2). The sequence is that of 2-oxoglutarate dehydrogenase E1 component from Staphylococcus epidermidis (strain ATCC 35984 / DSM 28319 / BCRC 17069 / CCUG 31568 / BM 3577 / RP62A).